Here is a 201-residue protein sequence, read N- to C-terminus: Ribonuclease HII (201 aa).

The region spanning 11–201 (LRECGCDEAG…VVDADRPTTE (191 aa)) is the RNase H type-2 domain. A divalent metal cation is bound by residues aspartate 17, glutamate 18, and aspartate 109.

The protein belongs to the RNase HII family. The cofactor is Mn(2+). Mg(2+) is required as a cofactor.

It is found in the cytoplasm. The catalysed reaction is Endonucleolytic cleavage to 5'-phosphomonoester.. Functionally, endonuclease that specifically degrades the RNA of RNA-DNA hybrids. This Porphyromonas gingivalis (strain ATCC BAA-308 / W83) protein is Ribonuclease HII (rnhB).